Here is a 326-residue protein sequence, read N- to C-terminus: Zona pellucida-binding protein 2 (326 aa).

The first 19 residues, M1–S19, serve as a signal peptide directing secretion. N-linked (GlcNAc...) asparagine glycans are attached at residues N86, N220, and N256.

Belongs to the zona pellucida-binding protein Sp38 family. Post-translationally, N-glycosylated. Expressed specifically in male germ cells.

It localises to the cytoplasmic vesicle. The protein localises to the secretory vesicle. The protein resides in the acrosome. Its subcellular location is the secreted. In terms of biological role, is implicated in sperm-oocyte interaction during fertilization. In Mus musculus (Mouse), this protein is Zona pellucida-binding protein 2 (Zpbp2).